Consider the following 222-residue polypeptide: uncharacterized protein (222 aa).

Positions 1–27 (MSFTRRKFVLGMGTVIFFTGSASSLLA) form a signal peptide, tat-type signal. 4Fe-4S ferredoxin-type domains lie at 37–66 (YAMIHDESRCNGCNICARACRKTNHAPAQG), 83–114 (TQYHFFRQSCQHCEDAPCIDVCPTGASWRDEQ), and 115–144 (GIVRVEKSQCIGCSYCIGACPYQVRYLNPV). Residues cysteine 46, cysteine 49, cysteine 52, cysteine 56, cysteine 92, cysteine 95, cysteine 100, cysteine 104, cysteine 124, cysteine 127, cysteine 130, cysteine 134, cysteine 151, cysteine 154, cysteine 167, and cysteine 171 each contribute to the [4Fe-4S] cluster site.

In terms of processing, predicted to be exported by the Tat system. The position of the signal peptide cleavage has not been experimentally proven.

This is an uncharacterized protein from Escherichia coli O157:H7.